Reading from the N-terminus, the 115-residue chain is Nitrogenase iron-iron protein delta chain (115 aa).

In terms of assembly, hexamer of two alpha, two beta, and two delta chains. Iron-sulfur cluster serves as cofactor.

It catalyses the reaction N2 + 8 reduced [2Fe-2S]-[ferredoxin] + 16 ATP + 16 H2O = H2 + 8 oxidized [2Fe-2S]-[ferredoxin] + 2 NH4(+) + 16 ADP + 16 phosphate + 6 H(+). Its function is as follows. The key enzymatic reactions in nitrogen fixation are catalyzed by the nitrogenase complex, which has 2 components: the iron protein (component 2) and a component 1 which is either a molybdenum-iron protein, a vanadium-iron, or an iron-iron protein. This chain is Nitrogenase iron-iron protein delta chain (anfG), found in Rhodobacter capsulatus (Rhodopseudomonas capsulata).